The sequence spans 90 residues: Probable Fe(2+)-trafficking protein (90 aa).

It belongs to the Fe(2+)-trafficking protein family.

Could be a mediator in iron transactions between iron acquisition and iron-requiring processes, such as synthesis and/or repair of Fe-S clusters in biosynthetic enzymes. This chain is Probable Fe(2+)-trafficking protein, found in Xylella fastidiosa (strain M23).